We begin with the raw amino-acid sequence, 234 residues long: Cytochrome b (234 aa).

A run of 4 helical transmembrane segments spans residues 33–53, 77–98, 113–133, and 178–198; these read FGSLLGLCLMIQILTGLFLAM, WLIRYLHANGASMFFICLYMHV, WNIGIILLFAVMATAFMGYVL, and FFAFHFILPFIIAALVMIHLL. Positions 83 and 97 each coordinate heme b. 2 residues coordinate heme b: H182 and H196. Residue H201 coordinates a ubiquinone. Residues 226-234 form a helical membrane-spanning segment; the sequence is IKDVLGFLM.

The protein belongs to the cytochrome b family. The cytochrome bc1 complex contains 11 subunits: 3 respiratory subunits (MT-CYB, CYC1 and UQCRFS1), 2 core proteins (UQCRC1 and UQCRC2) and 6 low-molecular weight proteins (UQCRH/QCR6, UQCRB/QCR7, UQCRQ/QCR8, UQCR10/QCR9, UQCR11/QCR10 and a cleavage product of UQCRFS1). This cytochrome bc1 complex then forms a dimer. It depends on heme b as a cofactor.

The protein resides in the mitochondrion inner membrane. Functionally, component of the ubiquinol-cytochrome c reductase complex (complex III or cytochrome b-c1 complex) that is part of the mitochondrial respiratory chain. The b-c1 complex mediates electron transfer from ubiquinol to cytochrome c. Contributes to the generation of a proton gradient across the mitochondrial membrane that is then used for ATP synthesis. This Lepus alleni (Antelope jackrabbit) protein is Cytochrome b (MT-CYB).